The following is a 309-amino-acid chain: Probable lipid kinase YegS-like (309 aa).

The DAGKc domain maps to 1-134; that stretch reads MTTPRWRLIL…IDLLRVDADG (134 aa). Residues T39, 65–71, and T96 each bind ATP; that span reads GDGTLSA. Residues L219, D222, and L224 each coordinate Mg(2+). The active-site Proton acceptor is the E280.

Belongs to the diacylglycerol/lipid kinase family. YegS lipid kinase subfamily. Mg(2+) serves as cofactor. Requires Ca(2+) as cofactor.

It is found in the cytoplasm. Probably phosphorylates lipids; the in vivo substrate is unknown. The protein is Probable lipid kinase YegS-like of Stenotrophomonas maltophilia (strain K279a).